Here is a 250-residue protein sequence, read N- to C-terminus: 5'-nucleotidase SurE (250 aa).

Residues aspartate 8, aspartate 9, serine 40, and asparagine 94 each coordinate a divalent metal cation.

This sequence belongs to the SurE nucleotidase family. It depends on a divalent metal cation as a cofactor.

The protein resides in the cytoplasm. It carries out the reaction a ribonucleoside 5'-phosphate + H2O = a ribonucleoside + phosphate. Functionally, nucleotidase that shows phosphatase activity on nucleoside 5'-monophosphates. The sequence is that of 5'-nucleotidase SurE from Wolbachia sp. subsp. Drosophila simulans (strain wRi).